We begin with the raw amino-acid sequence, 369 residues long: Histidinol-phosphate aminotransferase 2 (369 aa).

Lysine 231 carries the N6-(pyridoxal phosphate)lysine modification.

The protein belongs to the class-II pyridoxal-phosphate-dependent aminotransferase family. Histidinol-phosphate aminotransferase subfamily. Homodimer. It depends on pyridoxal 5'-phosphate as a cofactor.

The catalysed reaction is L-histidinol phosphate + 2-oxoglutarate = 3-(imidazol-4-yl)-2-oxopropyl phosphate + L-glutamate. The protein operates within amino-acid biosynthesis; L-histidine biosynthesis; L-histidine from 5-phospho-alpha-D-ribose 1-diphosphate: step 7/9. The sequence is that of Histidinol-phosphate aminotransferase 2 from Legionella pneumophila (strain Paris).